The primary structure comprises 956 residues: Translation initiation factor IF-2 (956 aa).

Disordered stretches follow at residues 53–102 (QFAG…QQEI), 116–315 (GKID…NRPA), and 334–371 (TLEK…ALDE). The segment covering 58–102 (KGNKEASKEVGEEKRKEKEALRVEREKEIEDKRRQEEERQKQQEI) has biased composition (basic and acidic residues). The span at 142-158 (VTPTQTEKPVQKETVQS) shows a compositional bias: polar residues. Basic and acidic residues predominate over residues 166–186 (SEEKKVEKPIITEKKEVKAES). The span at 197–208 (TDPTTAEETITT) shows a compositional bias: low complexity. The span at 209 to 229 (QYQKLSGTTLTGQTIDLSQFN) shows a compositional bias: polar residues. Over residues 240-257 (ITPNKPGTPGVGNNNNAN) the composition is skewed to low complexity. A compositionally biased stretch (basic residues) spans 343 to 352 (GKSKAAKYRR). The segment covering 353–371 (DKRETHRQKSDDEQRALDE) has biased composition (basic and acidic residues). The tr-type G domain maps to 454–622 (TRAPIVTVMG…KVLLEAEILD (169 aa)). The tract at residues 463 to 470 (GHVDHGKT) is G1. 463–470 (GHVDHGKT) is a GTP binding site. A G2 region spans residues 488 to 492 (GITQH). The G3 stretch occupies residues 510–513 (DTPG). GTP is bound by residues 510-514 (DTPGH) and 564-567 (NKVD). The tract at residues 564–567 (NKVD) is G4. Positions 600–602 (SAK) are G5.

It belongs to the TRAFAC class translation factor GTPase superfamily. Classic translation factor GTPase family. IF-2 subfamily.

The protein resides in the cytoplasm. Its function is as follows. One of the essential components for the initiation of protein synthesis. Protects formylmethionyl-tRNA from spontaneous hydrolysis and promotes its binding to the 30S ribosomal subunits. Also involved in the hydrolysis of GTP during the formation of the 70S ribosomal complex. This is Translation initiation factor IF-2 from Flavobacterium johnsoniae (strain ATCC 17061 / DSM 2064 / JCM 8514 / BCRC 14874 / CCUG 350202 / NBRC 14942 / NCIMB 11054 / UW101) (Cytophaga johnsonae).